A 256-amino-acid polypeptide reads, in one-letter code: UPF0246 protein Maqu_2499 (256 aa).

The protein belongs to the UPF0246 family.

This Marinobacter nauticus (strain ATCC 700491 / DSM 11845 / VT8) (Marinobacter aquaeolei) protein is UPF0246 protein Maqu_2499.